Consider the following 496-residue polypeptide: Sugar transporter ERD6 (496 aa).

6 helical membrane passes run 58 to 78, 94 to 114, 128 to 148, 156 to 176, 183 to 203, and 211 to 231; these read VFLSTFVAVSGSFCTGCGVGF, VAEYSMFGSILTLGGLIGAVF, MLFCEFFCITGWLCVALAQNA, LLLGIGVGIFSYVIPVYIAEI, GSFVFANQLMQNCGISLFFII, and LLTVVGLVPCVFHVFCLFFIP. Position 256 is a phosphoserine (Ser256). A run of 6 helical transmembrane segments spans residues 292–312, 329–349, 364–384, 394–414, 430–450, and 456–476; these read YPLIIGVGLMFLQQLCGSSGV, IGTSVIATIMVPKAMLATVLV, AMGLSALLLSVSYGFQSFGIL, IGVLGHIVSFAMGMGGLPWII, LVTVTNWLFGWIITYTFNFML, and GMFLIFSMVSASSIVFIYFLV.

This sequence belongs to the major facilitator superfamily. Sugar transporter (TC 2.A.1.1) family. In terms of tissue distribution, expressed in both shoots and roots. In roots, expressed in epidermal cells and especially strongly in cortex cells. In flowers, expressed in sepals.

The protein localises to the membrane. Its function is as follows. Sugar transporter. The sequence is that of Sugar transporter ERD6 (ERD6) from Arabidopsis thaliana (Mouse-ear cress).